The following is a 376-amino-acid chain: Putative glutamate--cysteine ligase 2-1 (376 aa).

It belongs to the glutamate--cysteine ligase type 2 family. YbdK subfamily.

It catalyses the reaction L-cysteine + L-glutamate + ATP = gamma-L-glutamyl-L-cysteine + ADP + phosphate + H(+). ATP-dependent carboxylate-amine ligase which exhibits weak glutamate--cysteine ligase activity. This chain is Putative glutamate--cysteine ligase 2-1, found in Mycobacterium sp. (strain KMS).